The sequence spans 566 residues: Intracellular exo-alpha-(1-&gt;5)-L-arabinofuranosidase (566 aa).

The segment covering 1–12 (MTTHNSQYSAET) has biased composition (polar residues). The disordered stretch occupies residues 1–39 (MTTHNSQYSAETTHPDKQESSPAPTAAGTTASNVSTTGN). Residues 20–32 (SSPAPTAAGTTAS) show a composition bias toward low complexity. Alpha-L-arabinofuranose is bound by residues E69, N114, and N214. The Proton donor/acceptor role is filled by E215. Residues Y286, E340, and Q409 each coordinate alpha-L-arabinofuranose. E340 serves as the catalytic Nucleophile.

The protein belongs to the glycosyl hydrolase 51 family. Homohexamer; trimer of dimers.

The protein resides in the cytoplasm. The catalysed reaction is Hydrolysis of terminal non-reducing alpha-L-arabinofuranoside residues in alpha-L-arabinosides.. Its pathway is glycan metabolism; L-arabinan degradation. With respect to regulation, completely inhibited by Hg(2+) and Cu(2+) ions, whereas 1 mM Zn(2+) inhibited activity by 51%. Its function is as follows. Involved in the degradation of arabinan and is a key enzyme in the complete degradation of the plant cell wall. Catalyzes the cleavage of terminal alpha-(1-&gt;5)-arabinofuranosyl bonds in different hemicellulosic homopolysaccharides (branched and debranched arabinans). It is active with sugar beet arabinan and wheat arabinoxylan. It also exhibited activity against alpha-(1-&gt;5)-linked arabinobiose, arabinotriose, arabinotetraose, and arabinopentaose. This is Intracellular exo-alpha-(1-&gt;5)-L-arabinofuranosidase (abfB) from Bifidobacterium longum.